The sequence spans 790 residues: Centrosomal protein of 78 kDa (790 aa).

Disordered stretches follow at residues 325-345, 362-385, 428-462, 654-732, and 756-790; these read YQWV…QRKK, GLAT…YAPN, VTVT…IKEE, AKTG…LNEP, and KTIK…AHLT. A phosphoserine mark is found at serine 330 and serine 332. The segment covering 428–438 has biased composition (low complexity); sequence VTVTVESPSSS. Residues 455–510 are a coiled coil; it reads QKTSIKEETLQEKLEECLRQLKEERVIRLKADKRVSELEHENAQLRNINFSLSEAL. Basic and acidic residues-rich tracts occupy residues 693-708 and 721-732; these read PSRR…KDLL and GPGDRRSLLNEP.

This sequence belongs to the CEP78 family. Interacts with PLK4. Interacts with FAM161A. Interacts with IFT20; regulating IFT20 stability and localization. Interacts with TTC21A; regulating TTC21A stability and localization. Interacts with USP16; promoting USP16-dependent deubiquitination of tektins. Interacts with DCAF1/VPRBP; promoting localization of the EDVP complex to centrosomes. Interacts with CEP350; promoting CEP78 localization to centrosome and centriole. As to expression, expressed by photoreceptor cells in the retina.

The protein localises to the cytoplasm. It is found in the cytoskeleton. The protein resides in the microtubule organizing center. It localises to the centrosome. Its subcellular location is the centriole. The protein localises to the cilium basal body. Centriole wall protein that localizes to mature centrioles and regulates centriole and cilia biogenesis. Involved in centrosome duplication: required for efficient PLK4 centrosomal localization and PLK4-induced overduplication of centrioles. Involved in cilium biogenesis and controls cilium length. Acts as a regulator of protein stability by preventing ubiquitination of centrosomal proteins, such as CCP110 and tektins. Associates with the EDVP complex, preventing ubiquitination and degradation of CCP110. Promotes deubiquitination of tektin proteins (TEKT1, TEKT2, TEK3, TEKT4 and TEKT5) via its interaction with USP16. This chain is Centrosomal protein of 78 kDa, found in Mus musculus (Mouse).